We begin with the raw amino-acid sequence, 300 residues long: Free fatty acid receptor 1 (300 aa).

Residues Met1–Ser8 lie on the Extracellular side of the membrane. The helical transmembrane segment at Phe9–Val31 threads the bilayer. The Cytoplasmic portion of the chain corresponds to Ser32–Ser41. The helical transmembrane segment at Leu42–Val64 threads the bilayer. Over Glu65 to Cys79 the chain is Extracellular. A disulfide bridge links Cys79 with Cys170. A helical membrane pass occupies residues Pro80–Ser101. Residues Ala102–Arg121 lie on the Cytoplasmic side of the membrane. A helical transmembrane segment spans residues Tyr122 to Leu142. The Extracellular portion of the chain corresponds to Gly143 to Ser178. A glycan (N-linked (GlcNAc...) asparagine) is linked at Asn153. The helical transmembrane segment at Ala179–Phe200 threads the bilayer. At Cys201–Ala223 the chain is on the cytoplasmic side. Residues Trp224–Phe248 form a helical membrane-spanning segment. Residues Ile249 to Ser256 are Extracellular-facing. A helical membrane pass occupies residues Trp257 to Leu279. The Cytoplasmic segment spans residues Gly280–Lys300.

This sequence belongs to the G-protein coupled receptor 1 family. Expressed in pancreatic islet beta cells (at protein level). Expressed in pancreatic islet beta cells.

The protein resides in the cell membrane. Is also activated by synthetic agonists, such as AM-8182, AM-6331 and TAK-875 (fasiglifam). AM-8182 is a full agonist, while AM-6331 and TAK-875 (fasiglifam) are partial agonists that potentiate the activity of the endogenous ligands, such as alpha-linolenic acid and gamma-linolenic acid. G-protein coupled receptor for medium and long chain saturated and unsaturated fatty acids that plays an important role in glucose homeostasis. Fatty acid binding increases glucose-stimulated insulin secretion, and may also enhance the secretion of glucagon-like peptide 1 (GLP-1). May also play a role in bone homeostasis; receptor signaling activates pathways that inhibit osteoclast differentiation. Ligand binding leads to a conformation change that triggers signaling via G-proteins that activate phospholipase C, leading to an increase of the intracellular calcium concentration. Seems to act through a G(q) and G(i)-mediated pathway. Mediates the anti-inflammatory effects of omega-3 polyunsaturated fatty acids (PUFAs) via inhibition of NLRP3 inflammasome activation. This is Free fatty acid receptor 1 (Ffar1) from Mus musculus (Mouse).